A 259-amino-acid chain; its full sequence is tRNA (guanine-N(7)-)-methyltransferase (259 aa).

The interval 1 to 36 (MTFPSHNPPETGHPSAAPDEALPAAEAPVPGDPEAR) is disordered. Residues 14-29 (PSAAPDEALPAAEAPV) show a composition bias toward low complexity. 4 residues coordinate S-adenosyl-L-methionine: Glu-91, Glu-116, Asp-143, and Asp-166. Residue Asp-166 is part of the active site. Residues Lys-170, Asp-202, and 237 to 240 (TKFE) each bind substrate.

Belongs to the class I-like SAM-binding methyltransferase superfamily. TrmB family.

It catalyses the reaction guanosine(46) in tRNA + S-adenosyl-L-methionine = N(7)-methylguanosine(46) in tRNA + S-adenosyl-L-homocysteine. It participates in tRNA modification; N(7)-methylguanine-tRNA biosynthesis. Its function is as follows. Catalyzes the formation of N(7)-methylguanine at position 46 (m7G46) in tRNA. In Aromatoleum aromaticum (strain DSM 19018 / LMG 30748 / EbN1) (Azoarcus sp. (strain EbN1)), this protein is tRNA (guanine-N(7)-)-methyltransferase.